The following is a 122-amino-acid chain: Small ribosomal subunit protein uS13 (122 aa).

Residues 99 to 122 form a disordered region; sequence RGQRTHTNARTRKGPAKAIAGKKK.

Belongs to the universal ribosomal protein uS13 family. Part of the 30S ribosomal subunit. Forms a loose heterodimer with protein S19. Forms two bridges to the 50S subunit in the 70S ribosome.

Located at the top of the head of the 30S subunit, it contacts several helices of the 16S rRNA. In the 70S ribosome it contacts the 23S rRNA (bridge B1a) and protein L5 of the 50S subunit (bridge B1b), connecting the 2 subunits; these bridges are implicated in subunit movement. Contacts the tRNAs in the A and P-sites. The protein is Small ribosomal subunit protein uS13 of Cereibacter sphaeroides (strain ATCC 17025 / ATH 2.4.3) (Rhodobacter sphaeroides).